Here is a 4349-residue protein sequence, read N- to C-terminus: Dynein heavy chain, cytoplasmic (4349 aa).

The tract at residues 1-1907 is stem; the sequence is MEVTSAAAPS…YIKMANAKLN (1907 aa). Coiled-coil stretches lie at residues 459 to 480, 1178 to 1215, 1266 to 1293, 1334 to 1354, 1560 to 1577, and 1640 to 1670; these read WEENVKEFTNVAREVTRRRNEK, LMKFASRLGNRMREINAEIEKARKHLESQSSDASSTAQ, SQWEALKEILEKKSRIVQDQTDALQAKI, ESRISKLQDDAQMVAKAKEAL, YKEFEEEAVAWEDKLNRV, and NIPNVQKSLERLAEMLNKIQKALGEYLEKER. AAA regions lie at residues 1908-2133, 2201-2459, 2565-2814, and 2908-3177; these read YGFE…VLVS, NAIR…FTTA, EVNT…WVRG, and TFCE…QGKV. 1946–1953 is an ATP binding site; the sequence is GPAGTGKT. Residues 2194–2217 adopt a coiled-coil conformation; the sequence is ANLEALENAIRELAAERHLVVNEL. ATP-binding positions include 2239–2246, 2604–2611, and 2946–2953; these read GNSGSGKS, GPPGSGKT, and GVSGSGKT. Coiled coils occupy residues 3186 to 3294, 3420 to 3477, and 3774 to 3807; these read LDFV…LAKA, GPLK…EMSR, and DNVIETLETLKTEAAEISAKMSNTEGVMAEVEEI. Positions 3186–3477 are stalk; that stretch reads LDFVTQYIKL…TQAIKAEMSR (292 aa). AAA regions lie at residues 3563–3792 and 4001–4213; these read LSTA…EISA and AERF…IVDT.

The protein belongs to the dynein heavy chain family. Consists of at least two heavy chains and a number of intermediate and light chains.

The protein resides in the cytoplasm. It localises to the cytoskeleton. Its function is as follows. Cytoplasmic dynein acts as a motor for the intracellular retrograde motility of vesicles and organelles along microtubules. Dynein has ATPase activity; the force-producing power stroke is thought to occur on release of ADP. The sequence is that of Dynein heavy chain, cytoplasmic (DHC1) from Fusarium vanettenii (Neocosmospora pisi).